The following is a 151-amino-acid chain: Cell division protein SepF (151 aa).

The protein belongs to the SepF family. Homodimer. Interacts with FtsZ.

The protein localises to the cytoplasm. Cell division protein that is part of the divisome complex and is recruited early to the Z-ring. Probably stimulates Z-ring formation, perhaps through the cross-linking of FtsZ protofilaments. Its function overlaps with FtsA. The sequence is that of Cell division protein SepF from Desulfitobacterium hafniense (strain Y51).